A 424-amino-acid polypeptide reads, in one-letter code: S-adenosylmethionine synthase (424 aa).

His14 is an ATP binding site. Residue Asp16 coordinates Mg(2+). Glu42 is a binding site for K(+). Glu55 and Gln98 together coordinate L-methionine. The tract at residues 98–108 (QSNDISRGIER) is flexible loop. ATP-binding positions include 165-167 (DAK), 242-243 (KF), Asp251, 257-258 (RK), Ala274, and Lys278. L-methionine is bound at residue Asp251. Lys282 is a binding site for L-methionine.

This sequence belongs to the AdoMet synthase family. In terms of assembly, homotetramer; dimer of dimers. Mg(2+) serves as cofactor. K(+) is required as a cofactor.

It localises to the cytoplasm. The enzyme catalyses L-methionine + ATP + H2O = S-adenosyl-L-methionine + phosphate + diphosphate. The protein operates within amino-acid biosynthesis; S-adenosyl-L-methionine biosynthesis; S-adenosyl-L-methionine from L-methionine: step 1/1. Its function is as follows. Catalyzes the formation of S-adenosylmethionine (AdoMet) from methionine and ATP. The overall synthetic reaction is composed of two sequential steps, AdoMet formation and the subsequent tripolyphosphate hydrolysis which occurs prior to release of AdoMet from the enzyme. The sequence is that of S-adenosylmethionine synthase from Azobacteroides pseudotrichonymphae genomovar. CFP2.